The sequence spans 309 residues: Spermatid maturation protein 1 (309 aa).

Residues 29-49 (VLLLLGLIICINISINIVTLL) traverse the membrane as a helical segment. The segment at 209–231 (PPPPSPEAPSHKNGGEGAVPEAE) is disordered. A coiled-coil region spans residues 259 to 285 (RIVYDARDMRRRLRELTREVEALSGCY).

It localises to the membrane. It is found in the cytoplasm. Functionally, required for proper cytoplasm removal during spermatogenesis. The chain is Spermatid maturation protein 1 (SPEM1) from Homo sapiens (Human).